We begin with the raw amino-acid sequence, 520 residues long: MTQTAHPDSVLIIDFGSQVTQLIARRVRETGVYCEIVPFQSSEEGFARLKPKAVILSGSPASALDEGSPRVPQVIFDSGLPIFGICYGQQTICAQLGGKVEAGHHREFGRAFLEIEQDCKLFEGLWSVGSRHQVWMSHGDRVTAIPPGFRVLATSSNAPFAFIADEARKYYAVQFHPEVVHTPDGAKLIQNFVHNIAGITGDWSMSAYRAKAVEQIRAQVGDKRVICALSGGVDSSVAALLIHEAVGDQLTCILVDHGLMRKNEAADVVAMFKEHYNLHLIHVDAIDRFVGELEGVSDPETKRKIIGRLFIETFEEEAKKLGGADFLGQGTLYPDVIESVSFSGGPSVTIKSHHNVGGLPDRMNMKLVEPLRELFKDEVRVLGKELGLPDSFIGRHPFPGPGLAIRCPGGVTREKLDILREADAIYLDEIRKAGLYDAIWQAFAVLLPVQTVGVMGDGRTYEFVCALRAVTSVDGMTADFYHYDMEFLGRAATRIINEVRGINRVVYDVTSKPPGTIEWE.

The Glutamine amidotransferase type-1 domain occupies Ser-9–Asp-202. Cys-86 serves as the catalytic Nucleophile. Active-site residues include His-176 and Glu-178. The GMPS ATP-PPase domain occupies Trp-203–Arg-395. Residue Ser-230–Ser-236 coordinates ATP.

In terms of assembly, homodimer.

The enzyme catalyses XMP + L-glutamine + ATP + H2O = GMP + L-glutamate + AMP + diphosphate + 2 H(+). Its pathway is purine metabolism; GMP biosynthesis; GMP from XMP (L-Gln route): step 1/1. Functionally, catalyzes the synthesis of GMP from XMP. The chain is GMP synthase [glutamine-hydrolyzing] from Allorhizobium ampelinum (strain ATCC BAA-846 / DSM 112012 / S4) (Agrobacterium vitis (strain S4)).